Reading from the N-terminus, the 338-residue chain is Auxin-responsive protein IAA9 (338 aa).

The segment at 1–25 (MSPEEELQSNVSVASSSPTSNCISR) is disordered. The span at 9-21 (SNVSVASSSPTSN) shows a compositional bias: low complexity. Positions 68-72 (LTLGL) match the EAR-like (transcriptional repression) motif. The segment at 150–186 (ATQSVTKKDVPQNIPKGQSSTTNNSSSPPAAKAQIVG) is disordered. Residues 168–180 (SSTTNNSSSPPAA) show a composition bias toward low complexity. The PB1 domain occupies 216–318 (ALFVKVSMDG…VCKKLKIMKG (103 aa)).

This sequence belongs to the Aux/IAA family. Homodimers and heterodimers. Interacts with TPL. Post-translationally, phosphorylated by phytochrome A in vitro. Highly expressed in the whole plant.

It is found in the nucleus. Aux/IAA proteins are short-lived transcriptional factors that function as repressors of early auxin response genes at low auxin concentrations. Repression is thought to result from the interaction with auxin response factors (ARFs), proteins that bind to the auxin-responsive promoter element (AuxRE). Formation of heterodimers with ARF proteins may alter their ability to modulate early auxin response genes expression. This Arabidopsis thaliana (Mouse-ear cress) protein is Auxin-responsive protein IAA9 (IAA9).